Here is a 365-residue protein sequence, read N- to C-terminus: Aminomethyltransferase (365 aa).

The protein belongs to the GcvT family. As to quaternary structure, the glycine cleavage system is composed of four proteins: P, T, L and H.

The catalysed reaction is N(6)-[(R)-S(8)-aminomethyldihydrolipoyl]-L-lysyl-[protein] + (6S)-5,6,7,8-tetrahydrofolate = N(6)-[(R)-dihydrolipoyl]-L-lysyl-[protein] + (6R)-5,10-methylene-5,6,7,8-tetrahydrofolate + NH4(+). The glycine cleavage system catalyzes the degradation of glycine. The protein is Aminomethyltransferase of Chlorobaculum tepidum (strain ATCC 49652 / DSM 12025 / NBRC 103806 / TLS) (Chlorobium tepidum).